We begin with the raw amino-acid sequence, 56 residues long: Large ribosomal subunit protein bL32 (56 aa).

Residues 1 to 26 (MAVQKSKVTRSRRGQRRSHDALTAAA) form a disordered region. The span at 7 to 16 (KVTRSRRGQR) shows a compositional bias: basic residues.

This sequence belongs to the bacterial ribosomal protein bL32 family.

The chain is Large ribosomal subunit protein bL32 (rpmF) from Moritella marina (Vibrio marinus).